We begin with the raw amino-acid sequence, 209 residues long: uncharacterized protein (209 aa).

Transmembrane regions (helical) follow at residues 10 to 32 (AVVIILTRFMEAIAIIISIYLAF), 37 to 59 (LRYVLATAGVFLLSVLINLTGLI), and 64 to 86 (FIYFSLASIFLSALILTALILYV).

It is found in the cell membrane. This is an uncharacterized protein from Aquifex aeolicus (strain VF5).